A 1466-amino-acid polypeptide reads, in one-letter code: Adhesion G protein-coupled receptor L1 (1466 aa).

An N-terminal signal peptide occupies residues 1 to 28 (MARLAAALWSLCVTTVLVTSATQGLSRA). Over 29-852 (GLPFGLMRRE…EIYQGRINEL (824 aa)) the chain is Extracellular. In terms of domain architecture, SUEL-type lectin spans 40–129 (ACEGYPIELR…KYLEVQYDCV (90 aa)). Intrachain disulfides connect Cys-41–Cys-71, Cys-50–Cys-128, Cys-83–Cys-115, Cys-96–Cys-102, and Cys-135–Cys-317. Glu-42 is an alpha-L-rhamnose binding site. Asn-98 carries N-linked (GlcNAc...) asparagine glycosylation. 117 to 120 (GTYK) lines the alpha-L-rhamnose pocket. The Olfactomedin-like domain maps to 134-393 (VCPGTLQKVL…VVRYSLEFGP (260 aa)). Residues 395–463 (DPSAGPATSP…APAPSTRRPP (69 aa)) form a disordered region. Low complexity predominate over residues 400–436 (PATSPPLSTTTTARPTPLTSTASPAATTPLRRAPLTT). Pro residues predominate over residues 448-463 (DLPPATAPAPSTRRPP). Cystine bridges form between Cys-475–Cys-510 and Cys-498–Cys-527. Asn-526, Asn-635, Asn-736, Asn-795, Asn-800, and Asn-821 each carry an N-linked (GlcNAc...) asparagine glycan. The 182-residue stretch at 664–845 (PARFLAAKQN…AVLMAHREIY (182 aa)) folds into the GAIN-B domain. 2 disulfide bridges follow: Cys-796–Cys-827 and Cys-815–Cys-829. The interval 796–845 (CSFWNYSERSMLGYWSTQGCRLVESNKTHTTCACSHLTNFAVLMAHREIY) is GPS. The chain crosses the membrane as a helical span at residues 853-873 (LLSVITWVGIVISLVCLAICI). Topologically, residues 874-887 (STFCFLRGLQTDRN) are cytoplasmic. The helical transmembrane segment at 888–908 (TIHKNLCINLFLAELLFLVGI) threads the bilayer. The Extracellular segment spans residues 909–914 (DKTQYE). Residues 915-935 (VACPIFAGLLHYFFLAAFSWL) form a helical membrane-spanning segment. Topologically, residues 936–958 (CLEGVHLYLLLVEVFESEYSRTK) are cytoplasmic. The chain crosses the membrane as a helical span at residues 959–979 (YYYLGGYCFPALVVGIAAAID). The Extracellular portion of the chain corresponds to 980–996 (YRSYGTEKACWLRVDNY). Residues 997–1017 (FIWSFIGPVSFVIVVNLVFLM) traverse the membrane as a helical segment. Topologically, residues 1018–1044 (VTLHKMIRSSSVLKPDSSRLDNIKSWA) are cytoplasmic. The chain crosses the membrane as a helical span at residues 1045–1065 (LGAIALLFLLGLTWAFGLLFI). Residues 1066–1069 (NKES) are Extracellular-facing. A helical transmembrane segment spans residues 1070–1090 (VVMAYLFTTFNAFQGVFIFVF). Over 1091-1466 (HCALQKKVHK…DGQMQLVTSL (376 aa)) the chain is Cytoplasmic. The residue at position 1188 (Arg-1188) is an Omega-N-methylarginine. A Phosphoserine modification is found at Ser-1214. Disordered regions lie at residues 1242–1267 (FNNSYSLRSGDFPPGDGGPEPPRGRN), 1288–1319 (RGASGGAKGPPPEPPVPPVPGVSEDEAGGPGS), 1352–1421 (ESES…SRPP), and 1443–1466 (YLAAPSLEGPGPDGDGQMQLVTSL). The span at 1296–1307 (GPPPEPPVPPVP) shows a compositional bias: pro residues. Ser-1319 carries the phosphoserine modification. The span at 1400–1412 (ALPPPPPAPPGPP) shows a compositional bias: pro residues. A phosphoserine mark is found at Ser-1448 and Ser-1465.

Belongs to the G-protein coupled receptor 2 family. Adhesion G-protein coupled receptor (ADGR) subfamily. As to quaternary structure, forms a heterodimer, consisting of a large extracellular region (p120) non-covalently linked to a seven-transmembrane moiety (p85). Interacts with syntaxin and with proteins of the SHANK family via the PDZ domain. Interacts (via extracellular domain) with FLRT1, FLRT2 and FLRT3 (via extracellular domain). Autoproteolytically cleaved into 2 subunits, an extracellular subunit and a seven-transmembrane subunit. This proteolytic processing takes place early in the biosynthetic pathway, either in the endoplasmic reticulum or in the early compartment of the Golgi apparatus.

The protein localises to the cell membrane. The protein resides in the cell projection. It localises to the axon. Its subcellular location is the growth cone. It is found in the synapse. The protein localises to the presynaptic cell membrane. The protein resides in the synaptosome. Functionally, calcium-independent receptor of high affinity for alpha-latrotoxin, an excitatory neurotoxin present in black widow spider venom which triggers massive exocytosis from neurons and neuroendocrine cells. Receptor for TENM2 that mediates heterophilic synaptic cell-cell contact and postsynaptic specialization. Receptor probably implicated in the regulation of exocytosis. In Mus musculus (Mouse), this protein is Adhesion G protein-coupled receptor L1.